We begin with the raw amino-acid sequence, 290 residues long: Protein-lysine methyltransferase METTL21E (290 aa).

S-adenosyl-L-methionine contacts are provided by residues Trp96, 124-126 (GAG), Asp145, Trp176, and Ala197.

Belongs to the methyltransferase superfamily. METTL21 family.

Protein-lysine methyltransferase. The polypeptide is Protein-lysine methyltransferase METTL21E (METTL21E) (Bos taurus (Bovine)).